The sequence spans 954 residues: cGMP-specific 3',5'-cyclic phosphodiesterase alpha (954 aa).

Residues 1–259 are Cytoplasmic-facing; the sequence is MMDTKVDQTI…NTFYSSFPFK (259 aa). Residues 260–280 traverse the membrane as a helical segment; the sequence is LFLHSLYMIFICFIYFVVLYF. At 281–296 the chain is on the extracellular side; the sequence is MLLKKIYTHPFIFHLS. The helical transmembrane segment at 297 to 317 threads the bilayer; sequence VLKFLFDIIFFLSFILYPLFL. Residues 318 to 327 lie on the Cytoplasmic side of the membrane; that stretch reads RLKRIDKIIY. Residues 328 to 348 traverse the membrane as a helical segment; sequence SSYISSYIFVCVTFLYSFIIF. At 349–365 the chain is on the extracellular side; sequence KCSSYSVKMNSNTYQNN. The helical transmembrane segment at 366–386 threads the bilayer; it reads FVFQNMLFLLINIIYICIFCF. Residues 387-401 are Cytoplasmic-facing; sequence LKNYMILYSFLYNCR. Residues 402 to 422 traverse the membrane as a helical segment; the sequence is FSIFCILFIFLYYYLFFSLDF. Over 423 to 432 the chain is Extracellular; sequence YRIIHLPLDN. Residues 433–453 traverse the membrane as a helical segment; that stretch reads FFFPFLCFLFFSFLFIFKIIM. The Cytoplasmic portion of the chain corresponds to 454 to 954; that stretch reads SLYYEYVYEK…LSKLELIKFE (501 aa). The PDEase domain occupies 586–930; that stretch reads NQEETKSFLS…ERWESHKNDN (345 aa). His680 serves as the catalytic Proton donor. 680-684 is a binding site for 3',5'-cyclic GMP; the sequence is HTSLH. Residues His684, His720, Asp721, and Asp832 each contribute to the Zn(2+) site. Asp721, Asp832, and Gln884 together coordinate 3',5'-cyclic GMP. Asp721 contacts Mg(2+).

It belongs to the cyclic nucleotide phosphodiesterase family. It depends on Zn(2+) as a cofactor. Mg(2+) is required as a cofactor.

It is found in the membrane. It carries out the reaction 3',5'-cyclic GMP + H2O = GMP + H(+). The protein operates within purine metabolism; 3',5'-cyclic GMP degradation; GMP from 3',5'-cyclic GMP: step 1/1. Its activity is regulated as follows. Not inhibited by cAMP. Inhibited by zaprinast. Specifically hydrolyzes the second messenger cGMP, which is a key regulator of many important physiological processes. This is cGMP-specific 3',5'-cyclic phosphodiesterase alpha from Plasmodium falciparum (isolate 3D7).